A 295-amino-acid chain; its full sequence is MKFGKSLSSQIVETLPEWRDKFLSYKDLKKRLKLIGGGGGGEERQAKRARVAADGGEEEAAAAAMTPEEAGFMRLLEAELDKFNSFFVEKEEEYIIRQKELQDRVARAAGRESKEELMRVRKEIVDFHGEMVLLENYSALNYTGLVKILKKYDKRTGALIRLPFIQKVLQQPFFTTDLLYKLVKQCEAMLDQLLPSNELPVSSEDGRGDSTNEDKPSNPSSSLVNGGTIPELDEIEYMESMYMKGTVAALRSLKEIRSGSSTVSAFSLPPLQGDSSPEEQQELWNKIPVIEQAAK.

One can recognise an SPX domain in the interval 1 to 166 (MKFGKSLSSQ…GALIRLPFIQ (166 aa)). Residues 197–227 (NELPVSSEDGRGDSTNEDKPSNPSSSLVNGG) form a disordered region. A compositionally biased stretch (basic and acidic residues) spans 204 to 216 (EDGRGDSTNEDKP).

In terms of assembly, interacts (via SPX domain) with PHR2 (via C-terminus). Interacts with RLI1 in the nucleus to prevents its positive regulation of leaf inclination during phosphate (Pi) starvation.

Its subcellular location is the nucleus. In terms of biological role, involved in plant adaptation to phosphate (Pi) starvation. Inhibits PHR2 DNA-binding activity via a Pi-dependent protein interaction. Suppresses the regulation on expression of PT2 by PHR2 and accumulation of shoot Pi. Optimizes growth under phosphate-limited conditions through a negative feedback loop of the PSI (phosphate starvation-induced) signaling pathway. Regulates the expression of SPX2, SPX3 and SPX5. May be an important link between signal transduction pathways related to phosphate starvation and cold stress. Together with SPX2, plays a negative role in the regulation of leaf inclination by preventing RLI1 transcription factor activity in Pi depleted conditions. In Oryza sativa subsp. indica (Rice), this protein is SPX domain-containing protein 1.